The following is a 421-amino-acid chain: Inhibitor of growth protein 3 (421 aa).

Residues 129–164 (PSQPVNNHHAHSHTPVEKRKYNPTSHHTATDHIPEK) form a disordered region. Residues lysine 148, lysine 165, and lysine 167 each participate in a glycyl lysine isopeptide (Lys-Gly) (interchain with G-Cter in SUMO2) cross-link. Lysine 181 bears the N6-acetyllysine mark. A Glycyl lysine isopeptide (Lys-Gly) (interchain with G-Cter in SUMO2) cross-link involves residue lysine 256. The residue at position 264 (lysine 264) is an N6-acetyllysine. The interval 286 to 324 (TQNASSSAADSRSGRKSKNNTKSSSQQSSSSSSSSSSSS) is disordered. Low complexity predominate over residues 308–324 (SSSQQSSSSSSSSSSSS). The PHD-type zinc-finger motif lies at 363–412 (PRYCICNQVSYGEMVGCDNQDCPIEWFHYGCVGLTEAPKGKWFCPQCTAA). 8 residues coordinate Zn(2+): cysteine 366, cysteine 368, cysteine 379, cysteine 384, histidine 390, cysteine 393, cysteine 406, and cysteine 409.

This sequence belongs to the ING family. As to quaternary structure, interacts with H3K4me3 and to a lesser extent with H3K4me2. Component of the NuA4 histone acetyltransferase complex which contains the catalytic subunit KAT5/TIP60 and the subunits EP400, TRRAP/PAF400, BRD8/SMAP, EPC1, DMAP1/DNMAP1, RUVBL1/TIP49, RUVBL2, ING3, actin, ACTL6A/BAF53A, MORF4L1/MRG15, MORF4L2/MRGX, MRGBP, YEATS4/GAS41, VPS72/YL1 and MEAF6. The NuA4 complex interacts with MYC. HTATTIP/TIP60, EPC1, and ING3 together constitute a minimal HAT complex termed Piccolo NuA4. Component of a SWR1-like complex.

It is found in the nucleus. Its function is as follows. Component of the NuA4 histone acetyltransferase (HAT) complex which is involved in transcriptional activation of select genes principally by acetylation of nucleosomal histones H4 and H2A. This modification may both alter nucleosome - DNA interactions and promote interaction of the modified histones with other proteins which positively regulate transcription. This complex may be required for the activation of transcriptional programs associated with oncogene and proto-oncogene mediated growth induction, tumor suppressor mediated growth arrest and replicative senescence, apoptosis, and DNA repair. NuA4 may also play a direct role in DNA repair when directly recruited to sites of DNA damage. Component of a SWR1-like complex that specifically mediates the removal of histone H2A.Z/H2AZ1 from the nucleosome. This chain is Inhibitor of growth protein 3 (Ing3), found in Rattus norvegicus (Rat).